A 215-amino-acid chain; its full sequence is Adenylate kinase (215 aa).

10-15 (GAGKGT) is a binding site for ATP. The NMP stretch occupies residues 30-60 (STGDMLRAAIIKAGTEMGKQAKSVIDAGQLV). Residues Thr31, Arg36, 58-60 (QLV), 86-89 (GFPR), and Gln93 each bind AMP. Residues 123–160 (GRRAHLPSGRTYHVTFNPSKVEGQDDVTGEPLVIREDD) form an LID region. Residues Arg124 and 133–134 (TY) contribute to the ATP site. Arg157 and Arg168 together coordinate AMP. Lys201 contacts ATP.

This sequence belongs to the adenylate kinase family. Monomer.

It is found in the cytoplasm. It carries out the reaction AMP + ATP = 2 ADP. Its pathway is purine metabolism; AMP biosynthesis via salvage pathway; AMP from ADP: step 1/1. Functionally, catalyzes the reversible transfer of the terminal phosphate group between ATP and AMP. Plays an important role in cellular energy homeostasis and in adenine nucleotide metabolism. This is Adenylate kinase from Aliivibrio salmonicida (strain LFI1238) (Vibrio salmonicida (strain LFI1238)).